The sequence spans 344 residues: L-rhamnose-proton symporter (344 aa).

10 consecutive transmembrane segments (helical) span residues 4–24, 38–58, 68–88, 101–121, 137–157, 175–195, 214–234, 259–279, 290–310, and 321–341; these read AITM…CFYA, WSVG…ALLL, FNLS…IGNI, MGIG…TPII, TLLG…AGQL, LLLA…MNAA, LPSY…FCFI, ILLS…YAWG, MSWM…GLVL, and VAVL…VGLG.

It belongs to the L-rhamnose transporter (TC 2.A.7.6) family.

The protein resides in the cell inner membrane. The catalysed reaction is L-rhamnopyranose(in) + H(+)(in) = L-rhamnopyranose(out) + H(+)(out). Functionally, uptake of L-rhamnose across the cytoplasmic membrane with the concomitant transport of protons into the cell (symport system). The chain is L-rhamnose-proton symporter from Salmonella gallinarum (strain 287/91 / NCTC 13346).